The chain runs to 352 residues: MAARVPSGEARRSASGAPVRRQVTIVRIYLDGVYGIGKSTTGRVMASAASGGSPTLYFPEPMAYWRTLFEADVISGIYDTQNRKQQGDLAADDAASITAHYQSRFTTPYLILHDHTFGLFGGDSLQRGTRPDLTVVFDRHPVASAVCFPAARYLIGDMSMCALIAMVATLPREPQGGNIVVTTLNVDEHVRRLRTRARIGEQIDMKLIATLRNVYSMLANTSNFLRSGRVWRDGWGELPLSCETYKHRATQMDAFQERESPELSDTLFAMFKTPELLDDRGVILEVHAWALDALMLKLRNLSVFCADLSGTPRQCAATVESLIPLMSSTLSDSESASSLERAARTFNAEMGV.

32–39 is an ATP binding site; the sequence is GVYGIGKS. The active-site Proton acceptor is glutamate 60. Residues tyrosine 78 and glutamine 102 each coordinate substrate. ATP is bound at residue arginine 192. Arginine 198 serves as a coordination point for substrate.

This sequence belongs to the herpesviridae thymidine kinase family. In terms of assembly, homodimer.

The enzyme catalyses thymidine + ATP = dTMP + ADP + H(+). Catalyzes the transfer of the gamma-phospho group of ATP to thymidine to generate dTMP in the salvage pathway of pyrimidine synthesis. The dTMP serves as a substrate for DNA polymerase during viral DNA replication. Allows the virus to be reactivated and to grow in non-proliferative cells lacking a high concentration of phosphorylated nucleic acid precursors. In Equus caballus (Horse), this protein is Thymidine kinase.